The sequence spans 491 residues: Acetyl-coenzyme A carboxylase carboxyl transferase subunit beta, chloroplastic (491 aa).

The region spanning 229–491 (LWVQCENCYG…FQLHGFFPLT (263 aa)) is the CoA carboxyltransferase N-terminal domain. 4 residues coordinate Zn(2+): C233, C236, C252, and C255. Residues 233 to 255 (CENCYGLNYKQFFRSRLNICEHC) form a C4-type zinc finger.

Belongs to the AccD/PCCB family. Acetyl-CoA carboxylase is a heterohexamer composed of biotin carboxyl carrier protein, biotin carboxylase and 2 subunits each of ACCase subunit alpha and ACCase plastid-coded subunit beta (accD). Zn(2+) is required as a cofactor.

The protein localises to the plastid. It localises to the chloroplast stroma. It catalyses the reaction N(6)-carboxybiotinyl-L-lysyl-[protein] + acetyl-CoA = N(6)-biotinyl-L-lysyl-[protein] + malonyl-CoA. Its pathway is lipid metabolism; malonyl-CoA biosynthesis; malonyl-CoA from acetyl-CoA: step 1/1. Functionally, component of the acetyl coenzyme A carboxylase (ACC) complex. Biotin carboxylase (BC) catalyzes the carboxylation of biotin on its carrier protein (BCCP) and then the CO(2) group is transferred by the transcarboxylase to acetyl-CoA to form malonyl-CoA. The polypeptide is Acetyl-coenzyme A carboxylase carboxyl transferase subunit beta, chloroplastic (Lemna minor (Common duckweed)).